The chain runs to 661 residues: Zeaxanthin epoxidase, chloroplastic (661 aa).

The transit peptide at 1-59 directs the protein to the chloroplast; the sequence is MLLFRATLLPSPPFFHKTYFSHLSPVIFSDDPLPVSLQRNRVSGCRKQKWRQIRTLALQ. FAD-binding positions include 81-109 and 359-372; these read RILI…LVFE and IFTW…LLGD. In terms of domain architecture, FHA spans 555-609; sequence HIIGSISHDDSEGISIHLPFPQVHKTHARIACKDNIFYLTDLQSQYGTWITDNEG.

FAD is required as a cofactor. In terms of tissue distribution, expressed in flower buds, lips and leaves. Detected in roots.

It localises to the plastid. Its subcellular location is the chloroplast. The catalysed reaction is all-trans-zeaxanthin + 4 reduced [2Fe-2S]-[ferredoxin] + 2 O2 + 4 H(+) = all-trans-violaxanthin + 4 oxidized [2Fe-2S]-[ferredoxin] + 2 H2O. The protein operates within plant hormone biosynthesis; abscisate biosynthesis. In terms of biological role, zeaxanthin epoxidase that plays an important role in the xanthophyll cycle and abscisic acid (ABA) biosynthesis. Converts zeaxanthin into antheraxanthin and subsequently violaxanthin. The protein is Zeaxanthin epoxidase, chloroplastic (ZEP) of Oncidium hybrid cultivar (Orchid).